The primary structure comprises 39 residues: Cytochrome b6-f complex subunit 5 (39 aa).

Residues 5-25 (LLCGIVLGLVPITLLGLFVAA) form a helical membrane-spanning segment.

Belongs to the PetG family. In terms of assembly, the 4 large subunits of the cytochrome b6-f complex are cytochrome b6, subunit IV (17 kDa polypeptide, PetD), cytochrome f and the Rieske protein, while the 4 small subunits are PetG, PetL, PetM and PetN. The complex functions as a dimer.

It localises to the cellular thylakoid membrane. Functionally, component of the cytochrome b6-f complex, which mediates electron transfer between photosystem II (PSII) and photosystem I (PSI), cyclic electron flow around PSI, and state transitions. PetG is required for either the stability or assembly of the cytochrome b6-f complex. The chain is Cytochrome b6-f complex subunit 5 from Prochlorococcus marinus (strain SARG / CCMP1375 / SS120).